A 51-amino-acid polypeptide reads, in one-letter code: Large ribosomal subunit protein eL39 (51 aa).

The disordered stretch occupies residues 32–51 (KRRVTRSPARRHWRRQKLKA).

This sequence belongs to the eukaryotic ribosomal protein eL39 family.

This chain is Large ribosomal subunit protein eL39, found in Pyrobaculum calidifontis (strain DSM 21063 / JCM 11548 / VA1).